A 613-amino-acid polypeptide reads, in one-letter code: RNA polymerase-associated protein RTF1 homolog (613 aa).

Disordered stretches follow at residues 1 to 90 and 121 to 247; these read MSSS…DKAR and QQLA…KDKI. Positions 55–68 are enriched in basic residues; that stretch reads PAKKKTLTKRKRRA. Residues 72–81 show a composition bias toward acidic residues; sequence SDDDQVDDDL. Over residues 167–176 the composition is skewed to basic and acidic residues; that stretch reads AAFHRPSDIN. Residues 175–209 adopt a coiled-coil conformation; it reads INRKHKEKNAMDALKNKRKEIEKKNAKNEALSIDA. The span at 215–235 shows a compositional bias: low complexity; the sequence is SGSSSSSSSSESSRSSSSSRE. Residues 236-247 are compositionally biased toward basic and acidic residues; it reads SSPERVSEKDKI. In terms of domain architecture, Plus3 spans 252–383; that stretch reads VDGLSELRRA…KKQDIEKAIN (132 aa). The stretch at 425-462 forms a coiled coil; it reads RGDIREAEQIQTKIDEIERQADELEKERSKSISAIAFI. Disordered regions lie at residues 485–549 and 564–613; these read SQDD…KTDI and LKDF…SSAV. A compositionally biased stretch (low complexity) spans 510-521; sequence TLSASSSTTNLS. Polar residues predominate over residues 569-586; the sequence is TPESSGNKRPSISSSKGV. The span at 602–613 shows a compositional bias: low complexity; sequence GSSTSAAPSSAV.

Component of the PAF1 complex which consists of at least cdc-73, ctr-9, leo-1, pafo-1 and rtfo-1.

The protein localises to the nucleus. Its function is as follows. Component of the PAF1 complex which is a multifunctional complex involved in transcription initiation via genetic interactions with TATA-binding proteins, elongation and transcription-coupled histone modification. The polypeptide is RNA polymerase-associated protein RTF1 homolog (Caenorhabditis elegans).